The chain runs to 325 residues: Methionine import ATP-binding protein MetN 3 (325 aa).

An ABC transporter domain is found at 2-239 (IEVQQLCKVY…PQSALGRALL (238 aa)). ATP is bound at residue 36–43 (GRSGAGKS).

Belongs to the ABC transporter superfamily. Methionine importer (TC 3.A.1.24) family. The complex is composed of two ATP-binding proteins (MetN), two transmembrane proteins (MetI) and a solute-binding protein (MetQ).

It localises to the cell inner membrane. The catalysed reaction is L-methionine(out) + ATP + H2O = L-methionine(in) + ADP + phosphate + H(+). It carries out the reaction D-methionine(out) + ATP + H2O = D-methionine(in) + ADP + phosphate + H(+). Part of the ABC transporter complex MetNIQ involved in methionine import. Responsible for energy coupling to the transport system. This is Methionine import ATP-binding protein MetN 3 from Pseudomonas fluorescens (strain ATCC BAA-477 / NRRL B-23932 / Pf-5).